A 300-amino-acid chain; its full sequence is Folate-binding protein 1 (300 aa).

An N-terminal signal peptide occupies residues 1 to 28 (MGRCLTKKVFLIQSPILFLHLLISLSSG). Cystine bridges form between cysteine 38-cysteine 76, cysteine 68-cysteine 111, cysteine 77-cysteine 114, cysteine 102-cysteine 139, and cysteine 132-cysteine 178. Asparagine 173 carries N-linked (GlcNAc...) asparagine glycosylation. The chain crosses the membrane as a helical span at residues 238–258 (MTTIQKISLGMSFLIAGMFLI).

It belongs to the folate receptor family. As to expression, expressed in leaves.

The protein resides in the membrane. Folic acid-binding protein involved in salicylic acid- (SA-) induced folate accumulation by triggering uptake and accumulation of folic acid in cells. May be implicated in the transport of the folates from the site of production (leaves) to the site of storage (fruits and seeds) and utilization (roots). The protein is Folate-binding protein 1 of Arabidopsis thaliana (Mouse-ear cress).